A 421-amino-acid chain; its full sequence is Diaminobutyrate--2-oxoglutarate transaminase (421 aa).

N6-(pyridoxal phosphate)lysine is present on lysine 262.

This sequence belongs to the class-III pyridoxal-phosphate-dependent aminotransferase family. The cofactor is pyridoxal 5'-phosphate.

It catalyses the reaction L-2,4-diaminobutanoate + 2-oxoglutarate = L-aspartate 4-semialdehyde + L-glutamate. It participates in amine and polyamine biosynthesis; ectoine biosynthesis; L-ectoine from L-aspartate 4-semialdehyde: step 1/3. Its function is as follows. Catalyzes reversively the conversion of L-aspartate beta-semialdehyde (ASA) to L-2,4-diaminobutyrate (DABA) by transamination with L-glutamate. This is Diaminobutyrate--2-oxoglutarate transaminase (ectB) from Vibrio parahaemolyticus serotype O3:K6 (strain RIMD 2210633).